A 177-amino-acid chain; its full sequence is Transmembrane protein 190 (177 aa).

Positions 1–21 (MLGCGIPALGLLLLLQGSADG) are cleaved as a signal peptide. At 22 to 81 (NGIQGFFYPWSCEGDIWDRESCGGQAAIDSPNLCLRLRCCYRNGVCYHQRPDENVRRKHM) the chain is on the extracellular side. One can recognise a P-type domain in the interval 31 to 71 (WSCEGDIWDRESCGGQAAIDSPNLCLRLRCCYRNGVCYHQR). Intrachain disulfides connect Cys33/Cys61, Cys43/Cys60, and Cys55/Cys67. A helical membrane pass occupies residues 82-102 (WALVWTCSGLLLLSCSICLFW). At 103-177 (WAKRRDVLHM…EETEGEEEED (75 aa)) the chain is on the cytoplasmic side. The disordered stretch occupies residues 131 to 177 (KHRGTKKTPSTGSVPVALSKESRDVEGGTEGEGTEEGEETEGEEEED). Over residues 157–177 (GGTEGEGTEEGEETEGEEEED) the composition is skewed to acidic residues.

The protein resides in the membrane. The polypeptide is Transmembrane protein 190 (TMEM190) (Homo sapiens (Human)).